Reading from the N-terminus, the 72-residue chain is Translation initiation factor IF-1 (72 aa).

Residues 1-72 (MAKEDSIEMQ…TKGRIVFRAR (72 aa)) enclose the S1-like domain.

It belongs to the IF-1 family. In terms of assembly, component of the 30S ribosomal translation pre-initiation complex which assembles on the 30S ribosome in the order IF-2 and IF-3, IF-1 and N-formylmethionyl-tRNA(fMet); mRNA recruitment can occur at any time during PIC assembly.

It localises to the cytoplasm. In terms of biological role, one of the essential components for the initiation of protein synthesis. Stabilizes the binding of IF-2 and IF-3 on the 30S subunit to which N-formylmethionyl-tRNA(fMet) subsequently binds. Helps modulate mRNA selection, yielding the 30S pre-initiation complex (PIC). Upon addition of the 50S ribosomal subunit IF-1, IF-2 and IF-3 are released leaving the mature 70S translation initiation complex. In Shewanella amazonensis (strain ATCC BAA-1098 / SB2B), this protein is Translation initiation factor IF-1.